A 95-amino-acid polypeptide reads, in one-letter code: Ubiquinol-cytochrome-c reductase complex assembly factor 3 (95 aa).

Residues 1–7 (MTTLRKL) are Mitochondrial matrix-facing. The chain crosses the membrane as a helical span at residues 8-28 (LLVGALLGAGAGVGTALFALV). A mediates lipid-binding region spans residues 23 to 80 (ALFALVTPGEERKQAMLKEMPEQYPQRRDEAARTKELLLATLQEAAATQENVAWRKNW). Residues 29 to 95 (TPGEERKQAM…GGGGGGGRSA (67 aa)) are Mitochondrial intermembrane-facing.

This sequence belongs to the UQCC3 family. In terms of assembly, associates with the ubiquinol-cytochrome c reductase complex (mitochondrial respiratory chain complex III(CIII) or cytochrome b-c1 complex). Interacts with UQCC1. Forms a complex, named COMC, composed of UQCC1, UQCC2; UQCC3 and UQCC4; mediates MT-CYB hemylation and association with the first nuclear-encoded complex III subunit UQCRQ. In terms of processing, probably cleaved by OMA1 under mitochondrial stress conditions.

Its subcellular location is the mitochondrion inner membrane. Functionally, required for the assembly of the ubiquinol-cytochrome c reductase complex (mitochondrial respiratory chain complex III or cytochrome b-c1 complex), mediating cytochrome b recruitment and probably stabilization within the complex. Thereby, plays an important role in ATP production by mitochondria. Cardiolipin-binding protein, it may also control the cardiolipin composition of mitochondria membranes and their morphology. This chain is Ubiquinol-cytochrome-c reductase complex assembly factor 3, found in Bos taurus (Bovine).